We begin with the raw amino-acid sequence, 379 residues long: Probable RNA methyltransferase RB6963 (379 aa).

Glutamate 89 serves as the catalytic Proton acceptor. In terms of domain architecture, Radical SAM core spans 96–332 (ATGRTTLCVS…VRYSLGNDIE (237 aa)). A disulfide bridge links cysteine 103 with cysteine 335. The [4Fe-4S] cluster site is built by cysteine 110, cysteine 114, and cysteine 117. Residues 160–161 (GE), serine 192, 215–217 (SLH), and asparagine 291 each bind S-adenosyl-L-methionine. Catalysis depends on cysteine 335, which acts as the S-methylcysteine intermediate.

The protein belongs to the radical SAM superfamily. RlmN family. [4Fe-4S] cluster is required as a cofactor.

It localises to the cytoplasm. The chain is Probable RNA methyltransferase RB6963 from Rhodopirellula baltica (strain DSM 10527 / NCIMB 13988 / SH1).